Here is a 90-residue protein sequence, read N- to C-terminus: MAQQTQSEIRYLTPPSVDVKKKKYCRFKKSGIRYIDYKDPEFLKKFLNEQGKILPRRITGTSLKFQRRIAQAVKRARHLALLPYVTDMMK.

The protein belongs to the bacterial ribosomal protein bS18 family. In terms of assembly, part of the 30S ribosomal subunit. Forms a tight heterodimer with protein bS6.

Its function is as follows. Binds as a heterodimer with protein bS6 to the central domain of the 16S rRNA, where it helps stabilize the platform of the 30S subunit. In Bacteroides thetaiotaomicron (strain ATCC 29148 / DSM 2079 / JCM 5827 / CCUG 10774 / NCTC 10582 / VPI-5482 / E50), this protein is Small ribosomal subunit protein bS18.